The sequence spans 396 residues: Probable sugar efflux transporter (396 aa).

Transmembrane regions (helical) follow at residues 15–35, 50–70, 81–101, 103–123, 136–156, 169–189, 209–229, 246–266, 275–295, 301–321, 333–353, and 364–384; these read VVTL…PVGL, VGIM…PFML, LICL…AWNF, VLVI…SITA, AQAL…GLPI, TFFA…KLLP, PALM…YTAY, FATV…LVFG, LLVS…LPAA, LALL…GMQV, VAMA…ALAG, and TIGY…VLIF.

It belongs to the major facilitator superfamily. SotB (TC 2.A.1.2) family.

The protein resides in the cell inner membrane. Involved in the efflux of sugars. The physiological role may be the reduction of the intracellular concentration of toxic sugars or sugar metabolites. This Salmonella arizonae (strain ATCC BAA-731 / CDC346-86 / RSK2980) protein is Probable sugar efflux transporter.